The primary structure comprises 549 residues: Polymorphic pseudokinase ROP5 (549 aa).

The first 24 residues, 1–24 (MATKLARLATWLVLVGCLLWRAGA), serve as a signal peptide directing secretion. Positions 234–527 (LKLVEPLRVG…LEAMETPEFL (294 aa)) constitute a Protein kinase domain. Arg241, Asp244, Arg245, Ser246, Lys263, Met337, Pro338, Ala340, Asp343, and Asp393 together coordinate ATP. Asp244 contacts ADP. ADP contacts are provided by Ser246, Lys263, Met337, Pro338, and Ala340. ADP is bound at residue Asp393. Asp393 and Asp407 together coordinate Mg(2+). Residue Asn434 is glycosylated (N-linked (GlcNAc...) asparagine). An intrachain disulfide couples Cys458 to Cys492.

It belongs to the protein kinase superfamily. Ser/Thr protein kinase family. Component of a complex at least composed of ROP18 and ROP5. Interacts with GRA7. Interacts with ROP17. Interacts with mouse IRGA6/IIGP1; the interaction results in inhibition of IRGA6/IIGP1 GTPase activity and/or oligomerization.

It is found in the secreted. Its subcellular location is the parasitophorous vacuole. It localises to the cytoplasmic vesicle. The protein localises to the secretory vesicle. The protein resides in the rhoptry. Functionally, pseudokinase. Essential for virulence in the type I lineage. Mediates parasite survival in mouse monocytes. Required for the parasite ability to resist mouse innate immune effectors triggered by the IFN-gamma (IFNG). Reduces the accumulation of mouse IRGA6 (IIGP1) and IRGB6 (TGTP1/TGTP2), immunity-related GTPases (IRGs) that protect mice from infection by certain intracellular pathogens, on the parasitophorous vacuole and IRG-mediated killing of parasites by mouse cells. Regulates the activity of ROP18, an active kinase that targets IRGs to prevent IRG-mediated parasite killing by mouse cells. Acts as an allosteric inhibitor of mouse IRGA6 (IIGP1). Does not affect IFN-gamma (IFNG)-mediated parasite killing in human cells that do not possess the large variety of IRGs. This is Polymorphic pseudokinase ROP5 from Toxoplasma gondii.